The chain runs to 174 residues: Extracellular cysteine protease (174 aa).

Catalysis depends on residues C24, H120, and N141.

Belongs to the peptidase C47 family. In terms of processing, proteolytically cleaved.

The protein resides in the secreted. It localises to the cell wall. Inhibited by heavy metal ions such as Zn(2+) or Ni(2+), iodoacetamide, N-ethylmaleimide, leupeptin, SDS and E-64. Also inhibited by chloromethylketones TPCK and TLCK and by human plasma inhibitor alpha-2-macroglobulin. Stimulated by L-cysteine. Its function is as follows. Cysteine protease able to cleave elastin, insulin, myoglobin, fibronectin, fibrinogen, HMW-kininogen, alpha-1-protease inhibitor and alpha-1-antitrypsin. Along with other extracellular proteases may contribute to the colonization and infection of human tissues. This is Extracellular cysteine protease (ecpA) from Staphylococcus epidermidis.